We begin with the raw amino-acid sequence, 254 residues long: 4-hydroxy-tetrahydrodipicolinate reductase (254 aa).

NAD(+) is bound by residues 8 to 13, aspartate 35, 86 to 88, and 110 to 113; these read GCSGKM, CST, and SANM. The active-site Proton donor/acceptor is the histidine 143. Histidine 144 contacts (S)-2,3,4,5-tetrahydrodipicolinate. Lysine 147 acts as the Proton donor in catalysis. 153–154 is a (S)-2,3,4,5-tetrahydrodipicolinate binding site; sequence GT.

This sequence belongs to the DapB family.

It is found in the cytoplasm. It carries out the reaction (S)-2,3,4,5-tetrahydrodipicolinate + NAD(+) + H2O = (2S,4S)-4-hydroxy-2,3,4,5-tetrahydrodipicolinate + NADH + H(+). The catalysed reaction is (S)-2,3,4,5-tetrahydrodipicolinate + NADP(+) + H2O = (2S,4S)-4-hydroxy-2,3,4,5-tetrahydrodipicolinate + NADPH + H(+). The protein operates within amino-acid biosynthesis; L-lysine biosynthesis via DAP pathway; (S)-tetrahydrodipicolinate from L-aspartate: step 4/4. Functionally, catalyzes the conversion of 4-hydroxy-tetrahydrodipicolinate (HTPA) to tetrahydrodipicolinate. The sequence is that of 4-hydroxy-tetrahydrodipicolinate reductase from Clostridium perfringens (strain ATCC 13124 / DSM 756 / JCM 1290 / NCIMB 6125 / NCTC 8237 / Type A).